We begin with the raw amino-acid sequence, 360 residues long: Aminomethyltransferase (360 aa).

The protein belongs to the GcvT family. As to quaternary structure, the glycine cleavage system is composed of four proteins: P, T, L and H.

It catalyses the reaction N(6)-[(R)-S(8)-aminomethyldihydrolipoyl]-L-lysyl-[protein] + (6S)-5,6,7,8-tetrahydrofolate = N(6)-[(R)-dihydrolipoyl]-L-lysyl-[protein] + (6R)-5,10-methylene-5,6,7,8-tetrahydrofolate + NH4(+). The glycine cleavage system catalyzes the degradation of glycine. This is Aminomethyltransferase from Pseudomonas putida (strain ATCC 47054 / DSM 6125 / CFBP 8728 / NCIMB 11950 / KT2440).